Here is a 25-residue protein sequence, read N- to C-terminus: U1-poneritoxin-Ng1b (25 aa).

In terms of tissue distribution, expressed by the venom gland.

It localises to the secreted. The protein localises to the target cell membrane. Has a broad spectrum of activity against both Gram-positive and Gram-negative bacteria and S.cerevisiae. Has insecticidal and hemolytic activities. May act by disrupting the integrity of the bacterial cell membrane. The polypeptide is U1-poneritoxin-Ng1b (Neoponera goeldii (Ponerine ant)).